A 313-amino-acid chain; its full sequence is Olfactory receptor 1J1 (313 aa).

Residues 1–25 (MRLKNHSSVSEFLLLGFPIRPEQGG) lie on the Extracellular side of the membrane. N-linked (GlcNAc...) asparagine glycosylation occurs at N5. Residues 26-46 (IFFSLFLAMYLITVLGNLLII) form a helical membrane-spanning segment. Residues 47–57 (LLIRLDSHLHT) lie on the Cytoplasmic side of the membrane. A helical membrane pass occupies residues 58–78 (PMYFFLSHLAFTDISFSSVTV). Topologically, residues 79-97 (PKMLTKVQNQPIPITYEEC) are extracellular. Cysteines 97 and 189 form a disulfide. A helical membrane pass occupies residues 98–118 (VSQTYFFIFFADLDSFLITSM). Over 119 to 142 (AYDRYMAICHPLHYITIMSQSRCA) the chain is Cytoplasmic. Residues 143 to 163 (MLVAVSWVIASACALLHSLLL) traverse the membrane as a helical segment. At 164–196 (DQLSFCADHTVPHFFCDLGALLKLSCSDTSLNQ) the chain is on the extracellular side. A helical membrane pass occupies residues 197–217 (LVIFTAGLAAIMLPFLCILIS). The Cytoplasmic segment spans residues 218-240 (YGRIGFTILQVPTTKGICKALST). Residues 241–261 (CGSHLSVVALYYGSIIGLYFL) traverse the membrane as a helical segment. At 262–271 (PPSNSKINNN) the chain is on the extracellular side. Residues 272–292 (IVASVMYTVVTPMLNPFIYSL) traverse the membrane as a helical segment. Over 293–313 (RNKDMKGALKKLLSKKTEFSK) the chain is Cytoplasmic.

This sequence belongs to the G-protein coupled receptor 1 family.

The protein localises to the cell membrane. Functionally, odorant receptor. The chain is Olfactory receptor 1J1 from Mus musculus (Mouse).